The sequence spans 429 residues: Palmitoyltransferase ZDHHC23 (429 aa).

Over 1–81 (MKPVKKKKTE…RIPWLRGAKK (81 aa)) the chain is Cytoplasmic. A helical membrane pass occupies residues 82–102 (VNISILPPLVLLPVLLRVASW). Residue histidine 103 is a topological domain, lumenal. The chain crosses the membrane as a helical span at residues 104 to 124 (FLLGVVVLTSLPMLALWYYYL). Over 125-130 (THRRKE) the chain is Cytoplasmic. The chain crosses the membrane as a helical span at residues 131–151 (QTLFFLSLGLFSLGYMYYVFL). Over 152–159 (QEVVPQGH) the chain is Lumenal. Residues 160 to 180 (VGPAQLALLTCGLFLILVALY) traverse the membrane as a helical segment. The Cytoplasmic segment spans residues 181 to 296 (RAKKNPGYLS…NSCVGESNHQ (116 aa)). Positions 212-247 (QEKTKGFPGTDTSGSLNNRTLKDDAKGSSRVGLDSP) are disordered. Over residues 221–230 (TDTSGSLNNR) the composition is skewed to polar residues. The DHHC domain occupies 253 to 303 (DWCAKCQLVRPARAWHCRICGICVRRMDHHCVWINSCVGESNHQAFILALS). Cysteine 283 serves as the catalytic S-palmitoyl cysteine intermediate. The helical transmembrane segment at 297-317 (AFILALSIFLLTSVYGISLTL) threads the bilayer. Over 318–347 (NTICRDRSLFTALFYCPGVYANYSSALSFT) the chain is Lumenal. Residues 348-368 (CVWYSVIITAGMAYIFLIQLI) traverse the membrane as a helical segment. Over 369–429 (NISYNVTERE…TVHTPAEDIV (61 aa)) the chain is Cytoplasmic. An interaction with NOS1 region spans residues 426-429 (EDIV).

This sequence belongs to the DHHC palmitoyltransferase family. In terms of assembly, interacts with NOS1. In terms of tissue distribution, expressed in the brain (at protein level), with highest levels in olfactory bulb, piriform cortex and hippocampus.

It is found in the golgi apparatus membrane. Its subcellular location is the golgi apparatus. The protein resides in the trans-Golgi network membrane. It catalyses the reaction L-cysteinyl-[protein] + hexadecanoyl-CoA = S-hexadecanoyl-L-cysteinyl-[protein] + CoA. Its function is as follows. Palmitoyltransferase that could catalyze the addition of palmitate onto various protein substrates and be involved in a variety of cellular processes. Palmitoyltransferase that mediates palmitoylation of KCNMA1, regulating localization of KCNMA1 to the plasma membrane. May be involved in NOS1 regulation and targeting to the synaptic membrane. This chain is Palmitoyltransferase ZDHHC23, found in Rattus norvegicus (Rat).